Here is a 219-residue protein sequence, read N- to C-terminus: Ras-related protein Rab-3B (219 aa).

The residue at position 2 (Ala2) is an N-acetylalanine. Residues Ser31, Ser32, Val33, Gly34, Lys35, Thr36, Ser37, Pro49, and Ser53 each contribute to the GTP site. A Mg(2+)-binding site is contributed by Thr36. The Switch 1 motif lies at 45–58 (DTFTPAFVSTVGID). Mg(2+) is bound by residues Thr54 and Asp77. Residues 78–96 (TAGQERYRTITTAYYRGAM) carry the Switch 2 motif. Gly80 is a GTP binding site. Thr86 bears the Phosphothreonine mark. GTP contacts are provided by Asn135, Lys136, Asp138, Ala166, and Lys167. A phosphoserine mark is found at Ser188 and Ser190. Residues Cys217 and Cys219 are each lipidated (S-geranylgeranyl cysteine). A Cysteine methyl ester modification is found at Cys219.

This sequence belongs to the small GTPase superfamily. Rab family. As to quaternary structure, interacts with RPH3A and RPH3AL. Interacts with RIMS1. Interacts with RIMS2. The GTP-bound form interacts with GAS8/DRC4 (via coiled-coil domains). Interacts with GDI2, and CHM; phosphorylation at Thr-86 disrupts these interactions. Interacts with MADD (via uDENN domain); the GTP-bound form is preferred for interaction. Mg(2+) is required as a cofactor. In terms of processing, phosphorylation of Thr-86 in the switch II region by LRRK2 prevents the association of RAB regulatory proteins, including CHM and RAB GDP dissociation inhibitor GDI2.

The protein localises to the cell membrane. It is found in the golgi apparatus. It carries out the reaction GTP + H2O = GDP + phosphate + H(+). With respect to regulation, regulated by guanine nucleotide exchange factors (GEFs) which promote the exchange of bound GDP for free GTP. Regulated by GTPase activating proteins (GAPs) which increase the GTP hydrolysis activity. Inhibited by GDP dissociation inhibitors (GDIs) which prevent Rab-GDP dissociation. The small GTPases Rab are key regulators of intracellular membrane trafficking, from the formation of transport vesicles to their fusion with membranes. Rabs cycle between an inactive GDP-bound form and an active GTP-bound form that is able to recruit to membranes different sets of downstream effectors directly responsible for vesicle formation, movement, tethering and fusion. The chain is Ras-related protein Rab-3B from Rattus norvegicus (Rat).